Reading from the N-terminus, the 814-residue chain is Transcription activator of gluconeogenesis PADG_03802 (814 aa).

A disordered region spans residues 1 to 90 (MTSSARNGSP…SAKDPLRPRR (90 aa)). Residues 69 to 83 (STSSTAASANNASAK) show a composition bias toward low complexity. The zn(2)-C6 fungal-type DNA-binding region spans 97 to 125 (CFACQRAHLTCGDERPCQRCIKRGLQDTC). 6 disordered regions span residues 164–208 (NTNS…TNNY), 236–287 (SAFQ…PTFF), 323–384 (AGDT…SRNI), 442–461 (PPTN…STPS), 598–617 (TGGS…YNSR), and 695–739 (SAAG…ATNV). The segment covering 171-188 (NGTNSNSDNNSTNTNSNN) has biased composition (low complexity). Composition is skewed to polar residues over residues 189–208 (KPSH…TNNY), 248–279 (FDLS…SQNP), 339–359 (GRSS…NQSP), and 375–384 (GQGQTNSRNI). Positions 442 to 451 (PPTNTQHQQQ) are enriched in low complexity. Residues 720 to 739 (GTTSAVNGVSNGSGNNATNV) are compositionally biased toward low complexity.

Belongs to the ERT1/acuK family.

The protein resides in the nucleus. Functionally, transcription factor which regulates nonfermentable carbon utilization. Activator of gluconeogenetic genes. In Paracoccidioides brasiliensis (strain Pb18), this protein is Transcription activator of gluconeogenesis PADG_03802.